Reading from the N-terminus, the 241-residue chain is Tryptophan synthase alpha chain (241 aa).

Residues E31 and D42 each act as proton acceptor in the active site.

This sequence belongs to the TrpA family. As to quaternary structure, tetramer of two alpha and two beta chains.

The catalysed reaction is (1S,2R)-1-C-(indol-3-yl)glycerol 3-phosphate + L-serine = D-glyceraldehyde 3-phosphate + L-tryptophan + H2O. Its pathway is amino-acid biosynthesis; L-tryptophan biosynthesis; L-tryptophan from chorismate: step 5/5. Functionally, the alpha subunit is responsible for the aldol cleavage of indoleglycerol phosphate to indole and glyceraldehyde 3-phosphate. The sequence is that of Tryptophan synthase alpha chain from Staphylococcus saprophyticus subsp. saprophyticus (strain ATCC 15305 / DSM 20229 / NCIMB 8711 / NCTC 7292 / S-41).